A 175-amino-acid chain; its full sequence is Bifunctional protein PyrR (175 aa).

Positions 97–109 (IVLIDDVLFTGRT) match the PRPP-binding motif.

This sequence belongs to the purine/pyrimidine phosphoribosyltransferase family. PyrR subfamily. In terms of assembly, homodimer and homohexamer; in equilibrium.

It carries out the reaction UMP + diphosphate = 5-phospho-alpha-D-ribose 1-diphosphate + uracil. In terms of biological role, regulates transcriptional attenuation of the pyrimidine nucleotide (pyr) operon by binding in a uridine-dependent manner to specific sites on pyr mRNA. This disrupts an antiterminator hairpin in the RNA and favors formation of a downstream transcription terminator, leading to a reduced expression of downstream genes. Functionally, also displays a weak uracil phosphoribosyltransferase activity which is not physiologically significant. This chain is Bifunctional protein PyrR, found in Leuconostoc mesenteroides subsp. mesenteroides (strain ATCC 8293 / DSM 20343 / BCRC 11652 / CCM 1803 / JCM 6124 / NCDO 523 / NBRC 100496 / NCIMB 8023 / NCTC 12954 / NRRL B-1118 / 37Y).